Reading from the N-terminus, the 660-residue chain is Protein FAM161A (660 aa).

2 coiled-coil regions span residues 93–120 (EEYFKKVEELKAAHIETMAKLEKMYQDK) and 296–320 (YHDLVKQKEERRRSLKEKSKEALLA). The tract at residues 341 to 525 (QLRDFLKYKK…PTVSSRGREQ (185 aa)) is required for interaction with CFAP418. Glycyl lysine isopeptide (Lys-Gly) (interchain with G-Cter in SUMO2) cross-links involve residues K468 and K484. Residues 522 to 552 (GREQAVRKSEKERMREYQRELEEREEKLKKR) adopt a coiled-coil conformation. The segment at 605-660 (KSVTEDKESFNEEEKIEERENGEENYFIDTNSQDSYKEKDEANEESEEEKSVEESH) is disordered. A compositionally biased stretch (basic and acidic residues) spans 606 to 623 (SVTEDKESFNEEEKIEER). Acidic residues predominate over residues 645-660 (EANEESEEEKSVEESH).

The protein belongs to the FAM161 family. Interacts (via central region) with CFAP418 (via N-terminus); the interaction is direct. Interacts (via C-terminus) with microtubules. Interacts with LCA5. Interacts with CEP290. Interacts with SDCCAG8. Interacts with FAM161B. Interacts with POC1B. Interacts with CEP78. Forms a microtubule-associated complex with POC5, CETN2 and POC1B. Interacts with CCDC15. As to expression, isoform 1 and isoform 3 are widely expressed with highest levels in retina and testis, with isoform 1 being the most abundant in all tissues tested.

It is found in the cytoplasm. The protein resides in the cytoskeleton. The protein localises to the cilium basal body. Its subcellular location is the cell projection. It localises to the cilium. It is found in the microtubule organizing center. The protein resides in the centrosome. The protein localises to the centriole. Its function is as follows. Involved in ciliogenesis. This Homo sapiens (Human) protein is Protein FAM161A (FAM161A).